The following is an 877-amino-acid chain: Alanine--tRNA ligase (877 aa).

4 residues coordinate Zn(2+): histidine 563, histidine 567, cysteine 667, and histidine 671.

The protein belongs to the class-II aminoacyl-tRNA synthetase family. It depends on Zn(2+) as a cofactor.

Its subcellular location is the cytoplasm. The enzyme catalyses tRNA(Ala) + L-alanine + ATP = L-alanyl-tRNA(Ala) + AMP + diphosphate. Functionally, catalyzes the attachment of alanine to tRNA(Ala) in a two-step reaction: alanine is first activated by ATP to form Ala-AMP and then transferred to the acceptor end of tRNA(Ala). Also edits incorrectly charged Ser-tRNA(Ala) and Gly-tRNA(Ala) via its editing domain. The polypeptide is Alanine--tRNA ligase (Cytophaga hutchinsonii (strain ATCC 33406 / DSM 1761 / CIP 103989 / NBRC 15051 / NCIMB 9469 / D465)).